Consider the following 281-residue polypeptide: MKYIGAHVSAAGGVDQAVIRAHEIKATAFALFTKNQRQWQAAPLSTEVIDRFKAACEQYAYMSAQILPHDSYLINLGHPDGEALEKSRIAFIDEMSRCQLLGLSLLNFHPGSHLKQIEEADCLARIAESINIALAETDGVTAVIENTAGQGSNLGFRFEHLAAIIDGVEDKSRVGVCIDTCHAFAGGYDLRTEADCEATFAEFDRIVGFRYLRGMHLNDAKSAFGSRVDRHHSLGEGNIGKTAFSYIMKDTRFDGIPMILETVNPDIWADEIAWLKSEAQY.

Zn(2+) is bound by residues histidine 69, histidine 109, glutamate 145, aspartate 179, histidine 182, histidine 216, aspartate 229, histidine 231, and glutamate 261.

It belongs to the AP endonuclease 2 family. Requires Zn(2+) as cofactor.

It catalyses the reaction Endonucleolytic cleavage to 5'-phosphooligonucleotide end-products.. Functionally, endonuclease IV plays a role in DNA repair. It cleaves phosphodiester bonds at apurinic or apyrimidinic (AP) sites, generating a 3'-hydroxyl group and a 5'-terminal sugar phosphate. The chain is Probable endonuclease 4 from Pectobacterium atrosepticum (strain SCRI 1043 / ATCC BAA-672) (Erwinia carotovora subsp. atroseptica).